Here is a 476-residue protein sequence, read N- to C-terminus: ATP sulfurylase 2 (476 aa).

Residues 1–56 (MSLMIRSSYVSHITLFQPRNSKPSSFTNQISFLSSSNNNPFLNLVYKRNLTMQSVS) constitute a chloroplast transit peptide.

Belongs to the sulfate adenylyltransferase family. In terms of assembly, homotetramer. As to expression, mostly expressed in leaves or cotyledons.

It is found in the plastid. The protein localises to the chloroplast. It localises to the cytoplasm. It carries out the reaction sulfate + ATP + H(+) = adenosine 5'-phosphosulfate + diphosphate. The protein operates within sulfur metabolism; hydrogen sulfide biosynthesis; sulfite from sulfate: step 1/3. The protein is ATP sulfurylase 2 (APS2) of Arabidopsis thaliana (Mouse-ear cress).